The following is a 323-amino-acid chain: Lipoyl synthase (323 aa).

Residues 1-14 (MVTILDRTKPDDKR) show a composition bias toward basic and acidic residues. Positions 1-25 (MVTILDRTKPDDKRIRHPEKAHKPD) are disordered. Residues Cys-61, Cys-66, Cys-72, Cys-87, Cys-91, Cys-94, and Ser-300 each coordinate [4Fe-4S] cluster. The Radical SAM core domain occupies 73–289 (WEKKHATFMI…EDIAYTKGFL (217 aa)).

This sequence belongs to the radical SAM superfamily. Lipoyl synthase family. [4Fe-4S] cluster serves as cofactor.

It is found in the cytoplasm. The enzyme catalyses [[Fe-S] cluster scaffold protein carrying a second [4Fe-4S](2+) cluster] + N(6)-octanoyl-L-lysyl-[protein] + 2 oxidized [2Fe-2S]-[ferredoxin] + 2 S-adenosyl-L-methionine + 4 H(+) = [[Fe-S] cluster scaffold protein] + N(6)-[(R)-dihydrolipoyl]-L-lysyl-[protein] + 4 Fe(3+) + 2 hydrogen sulfide + 2 5'-deoxyadenosine + 2 L-methionine + 2 reduced [2Fe-2S]-[ferredoxin]. It functions in the pathway protein modification; protein lipoylation via endogenous pathway; protein N(6)-(lipoyl)lysine from octanoyl-[acyl-carrier-protein]: step 2/2. In terms of biological role, catalyzes the radical-mediated insertion of two sulfur atoms into the C-6 and C-8 positions of the octanoyl moiety bound to the lipoyl domains of lipoate-dependent enzymes, thereby converting the octanoylated domains into lipoylated derivatives. The sequence is that of Lipoyl synthase from Allorhizobium ampelinum (strain ATCC BAA-846 / DSM 112012 / S4) (Agrobacterium vitis (strain S4)).